A 326-amino-acid polypeptide reads, in one-letter code: Glyoxylate/hydroxypyruvate reductase B (326 aa).

Residues Arg-237 and Glu-266 contribute to the active site. Catalysis depends on His-285, which acts as the Proton donor.

Belongs to the D-isomer specific 2-hydroxyacid dehydrogenase family. GhrB subfamily. As to quaternary structure, homodimer.

It is found in the cytoplasm. It catalyses the reaction glycolate + NADP(+) = glyoxylate + NADPH + H(+). The enzyme catalyses (R)-glycerate + NAD(+) = 3-hydroxypyruvate + NADH + H(+). The catalysed reaction is (R)-glycerate + NADP(+) = 3-hydroxypyruvate + NADPH + H(+). Its function is as follows. Catalyzes the NADPH-dependent reduction of glyoxylate and hydroxypyruvate into glycolate and glycerate, respectively. This Yersinia pseudotuberculosis serotype O:1b (strain IP 31758) protein is Glyoxylate/hydroxypyruvate reductase B.